The following is a 1192-amino-acid chain: Coiled-coil domain-containing protein 40 (1192 aa).

Disordered stretches follow at residues 1–78, 126–153, 173–196, 211–246, and 261–289; these read MMDA…PGMD, KAKH…LEVS, SSPE…NVSA, EPIE…YQRD, and GSLT…STPR. Positions 27–45 are enriched in acidic residues; the sequence is PETEVEFIGETAPDTDVEF. Positions 215–228 are enriched in pro residues; that stretch reads PTEPPEPAEPPKPA. Acidic residues predominate over residues 267 to 279; that stretch reads DTDDLPLETDEPP. Position 306 is a phosphoserine (S306). Coiled-coil stretches lie at residues 308-369, 425-451, 581-649, 733-768, 830-871, 919-972, and 1044-1118; these read EALL…ATKQ, KTCQ…ALHL, DSEI…MLNK, NTNC…EIAR, LQQE…KIAH, LRTL…EMRS, and QQRE…IVTL.

It belongs to the CCDC40 family. In terms of tissue distribution, specifically expressed in the embryonic node and midline.

The protein resides in the cytoplasm. The protein localises to the cell projection. It is found in the cilium. Its function is as follows. Required for assembly of dynein regulatory complex (DRC) and inner dynein arm (IDA) complexes, which are responsible for ciliary beat regulation, thereby playing a central role in motility in cilia and flagella. Probably acts together with CCDC39 to form a molecular ruler that determines the 96 nanometer (nm) repeat length and arrangements of components in cilia and flagella. Not required for outer dynein arm complexes assembly. Required for axonemal recruitment of CCDC39. The sequence is that of Coiled-coil domain-containing protein 40 from Mus musculus (Mouse).